The following is a 608-amino-acid chain: DNA mismatch repair protein MutL (608 aa).

The tract at residues 363–397 (ASLAMARKPDPPRFHETARPQPDPRHTPGTESVSV) is disordered. Residues 369-390 (RKPDPPRFHETARPQPDPRHTP) show a composition bias toward basic and acidic residues.

Belongs to the DNA mismatch repair MutL/HexB family.

In terms of biological role, this protein is involved in the repair of mismatches in DNA. It is required for dam-dependent methyl-directed DNA mismatch repair. May act as a 'molecular matchmaker', a protein that promotes the formation of a stable complex between two or more DNA-binding proteins in an ATP-dependent manner without itself being part of a final effector complex. This Pelobacter propionicus (strain DSM 2379 / NBRC 103807 / OttBd1) protein is DNA mismatch repair protein MutL.